The following is a 69-amino-acid chain: MRTIISLLLLSAMVFAVIEAISLEEGLQLFEGERGCVGENQQCADWAGPHCCSGLRCKELSIWDSRCLG.

An N-terminal signal peptide occupies residues 1–20; sequence MRTIISLLLLSAMVFAVIEA. Positions 21-34 are excised as a propeptide; that stretch reads ISLEEGLQLFEGER. 2 disulfide bridges follow: cysteine 36–cysteine 52 and cysteine 43–cysteine 57.

This sequence belongs to the neurotoxin 01 (U2-agtx) family. In terms of processing, does not contain a cysteine at position 61 which disrupts the cysteine framework. Expressed by the venom gland.

Its subcellular location is the secreted. This chain is U5-agatoxin-Ao1a, found in Agelena orientalis (Funnel-web spider).